Reading from the N-terminus, the 176-residue chain is Ribosome maturation factor RimM (176 aa).

The PRC barrel domain maps to 93-166 (EGEYYHADLI…RVVIELPAEI (74 aa)).

It belongs to the RimM family. As to quaternary structure, binds ribosomal protein uS19.

It localises to the cytoplasm. In terms of biological role, an accessory protein needed during the final step in the assembly of 30S ribosomal subunit, possibly for assembly of the head region. Essential for efficient processing of 16S rRNA. May be needed both before and after RbfA during the maturation of 16S rRNA. It has affinity for free ribosomal 30S subunits but not for 70S ribosomes. This Rhodopseudomonas palustris (strain BisB18) protein is Ribosome maturation factor RimM.